We begin with the raw amino-acid sequence, 214 residues long: Large ribosomal subunit protein uL3 (214 aa).

Positions 131–155 (GAQRTSHGNSRSHRVPGSIGMAQDP) are disordered. Q153 carries the N5-methylglutamine modification.

Belongs to the universal ribosomal protein uL3 family. Part of the 50S ribosomal subunit. Forms a cluster with proteins L14 and L19. Methylated by PrmB.

Its function is as follows. One of the primary rRNA binding proteins, it binds directly near the 3'-end of the 23S rRNA, where it nucleates assembly of the 50S subunit. This Neisseria meningitidis serogroup C (strain 053442) protein is Large ribosomal subunit protein uL3.